The chain runs to 353 residues: Photosystem II D2 protein (353 aa).

T2 is modified (N-acetylthreonine). T2 bears the Phosphothreonine mark. A helical transmembrane segment spans residues 41–61 (CAYFALGGWFTGTTFVTSWYT). H118 is a binding site for chlorophyll a. Residues 125-141 (GFMLRQFELARSVQLRP) traverse the membrane as a helical segment. Positions 130 and 143 each coordinate pheophytin a. A helical membrane pass occupies residues 153–166 (VFVSVFLIYPLGQS). A chlorophyll a-binding site is contributed by H198. A helical membrane pass occupies residues 208–228 (AALLCAIHGATVENTLFEDGD). H215 and F262 together coordinate a plastoquinone. H215 contributes to the Fe cation binding site. Residue H269 participates in Fe cation binding. The chain crosses the membrane as a helical span at residues 279–295 (GLWMSALGVVGLALNLR).

It belongs to the reaction center PufL/M/PsbA/D family. As to quaternary structure, PSII is composed of 1 copy each of membrane proteins PsbA, PsbB, PsbC, PsbD, PsbE, PsbF, PsbH, PsbI, PsbJ, PsbK, PsbL, PsbM, PsbT, PsbX, PsbY, PsbZ, Psb30/Ycf12, at least 3 peripheral proteins of the oxygen-evolving complex and a large number of cofactors. It forms dimeric complexes. The D1/D2 heterodimer binds P680, chlorophylls that are the primary electron donor of PSII, and subsequent electron acceptors. It shares a non-heme iron and each subunit binds pheophytin, quinone, additional chlorophylls, carotenoids and lipids. There is also a Cl(-1) ion associated with D1 and D2, which is required for oxygen evolution. The PSII complex binds additional chlorophylls, carotenoids and specific lipids. serves as cofactor.

It is found in the plastid. The protein localises to the chloroplast thylakoid membrane. It carries out the reaction 2 a plastoquinone + 4 hnu + 2 H2O = 2 a plastoquinol + O2. Photosystem II (PSII) is a light-driven water:plastoquinone oxidoreductase that uses light energy to abstract electrons from H(2)O, generating O(2) and a proton gradient subsequently used for ATP formation. It consists of a core antenna complex that captures photons, and an electron transfer chain that converts photonic excitation into a charge separation. The D1/D2 (PsbA/PsbD) reaction center heterodimer binds P680, the primary electron donor of PSII as well as several subsequent electron acceptors. D2 is needed for assembly of a stable PSII complex. The polypeptide is Photosystem II D2 protein (Phaseolus vulgaris (Kidney bean)).